We begin with the raw amino-acid sequence, 27 residues long: Omega-conotoxin RVIA (27 aa).

Disulfide bonds link cysteine 1–cysteine 16, cysteine 8–cysteine 19, and cysteine 15–cysteine 26. A 4-hydroxyproline mark is found at proline 4 and proline 7.

Belongs to the conotoxin O1 superfamily. In terms of tissue distribution, expressed by the venom duct.

It localises to the secreted. In terms of biological role, omega-conotoxins act at presynaptic membranes, they bind and block voltage-gated calcium channels (Cav). In Conus radiatus (Rayed cone), this protein is Omega-conotoxin RVIA.